The primary structure comprises 152 residues: Endoribonuclease YbeY (152 aa).

His-113, His-117, and His-123 together coordinate Zn(2+).

Belongs to the endoribonuclease YbeY family. Zn(2+) is required as a cofactor.

The protein resides in the cytoplasm. In terms of biological role, single strand-specific metallo-endoribonuclease involved in late-stage 70S ribosome quality control and in maturation of the 3' terminus of the 16S rRNA. In Acidovorax ebreus (strain TPSY) (Diaphorobacter sp. (strain TPSY)), this protein is Endoribonuclease YbeY.